A 389-amino-acid polypeptide reads, in one-letter code: Maintenance of mitochondrial morphology protein 1-1 (389 aa).

The Lumenal portion of the chain corresponds to Met-1 to Gly-22. A helical transmembrane segment spans residues Phe-23–Phe-43. The Cytoplasmic portion of the chain corresponds to Ser-44 to Arg-389. One can recognise an SMP-LTD domain in the interval Gln-83 to Pro-278. Disordered stretches follow at residues Lys-283–Ile-345 and Phe-360–Arg-389. Residues Met-330–Asn-341 are compositionally biased toward polar residues.

It belongs to the MMM1 family. Homodimer. Component of the ER-mitochondria encounter structure (ERMES) or MDM complex, composed of MMM1, MDM10, MDM12 and MDM34. An MMM1 homodimer associates with one molecule of MDM12 on each side in a pairwise head-to-tail manner, and the SMP-LTD domains of MMM1 and MDM12 generate a continuous hydrophobic tunnel for phospholipid trafficking.

It localises to the endoplasmic reticulum membrane. Component of the ERMES/MDM complex, which serves as a molecular tether to connect the endoplasmic reticulum (ER) and mitochondria. Components of this complex are involved in the control of mitochondrial shape and protein biogenesis, and function in nonvesicular lipid trafficking between the ER and mitochondria. The MDM12-MMM11 subcomplex functions in the major beta-barrel assembly pathway that is responsible for biogenesis of all outer membrane beta-barrel proteins, and acts in a late step after the SAM complex. The MDM10-MDM12-MMM1 subcomplex further acts in the TOM40-specific pathway after the action of the MDM12-MMM1 complex. Essential for establishing and maintaining the structure of mitochondria and maintenance of mtDNA nucleoids. The protein is Maintenance of mitochondrial morphology protein 1-1 of Yarrowia lipolytica (strain CLIB 122 / E 150) (Yeast).